The sequence spans 520 residues: Type I restriction enzyme EcoprrI methylase subunit (520 aa).

S-adenosyl-L-methionine is bound by residues 198–203, 230–232, and E254; these read EFFTPQ and SGS.

The protein belongs to the N(4)/N(6)-methyltransferase family. In terms of assembly, the type I restriction/modification system is composed of three polypeptides R, M and S; the restriction enzyme has stoichiometry R(2)M(2)S(1) while the methyltransferase is M(2)S(1).

It catalyses the reaction a 2'-deoxyadenosine in DNA + S-adenosyl-L-methionine = an N(6)-methyl-2'-deoxyadenosine in DNA + S-adenosyl-L-homocysteine + H(+). Its function is as follows. The subtype gamma methyltransferase (M) subunit of a type I restriction enzyme. The M and S subunits together form a methyltransferase (MTase) that methylates two adenine residues of the sequence 5'-CCAN(7)ATGC-3'. In the presence of the R subunit the complex can also act as an endonuclease, binding to the same target sequence but cutting the DNA some distance from this site. Whether the DNA is cut or modified depends on the methylation state of the target sequence. When the target site is unmodified, the DNA is cut. When the target site is hemimethylated, the complex acts as a maintenance MTase modifying the DNA so that both strands become methylated. After locating a non-methylated recognition site, the enzyme complex serves as a molecular motor that translocates DNA in an ATP-dependent manner until a collision occurs that triggers cleavage. The polypeptide is Type I restriction enzyme EcoprrI methylase subunit (Escherichia coli).